The sequence spans 485 residues: Protein hunchback (485 aa).

Positions 1 to 77 are disordered; sequence TSSTARKTPE…EEDDDIRTPK (77 aa). Polar residues predominate over residues 16 to 37; that stretch reads QDQNQLLKTPIQTNGNQQSTFD. The segment covering 59–72 has biased composition (acidic residues); that stretch reads ADVDDENDAEEDDD. C2H2-type zinc fingers lie at residues 87–109, 116–138, 144–166, and 172–196; these read YKCK…NRIH, LKCQ…LRNH, FQCK…MKSH, and YRCK…KYSH. 3 disordered regions span residues 229 to 270, 318 to 361, and 398 to 422; these read KDEG…PPSS, NGWQ…QVKH, and PKPV…EDDS. A compositionally biased stretch (polar residues) spans 257-270; that stretch reads NFEQSQHVPTPPSS. A compositionally biased stretch (acidic residues) spans 325 to 335; that stretch reads NCNEEETPEKE. The segment covering 345-358 has biased composition (polar residues); that stretch reads DLSSNPSTPSTVSQ. The segment covering 402 to 416 has biased composition (low complexity); that stretch reads QLQLPTSSTTTPLKT. C2H2-type zinc fingers lie at residues 432–454 and 460–484; these read YECK…MGYH and FKCN…RDAH.

This sequence belongs to the hunchback C2H2-type zinc-finger protein family.

It localises to the nucleus. Its function is as follows. Gap class segmentation protein that controls development of head structures. The chain is Protein hunchback (hb) from Clogmia albipunctata (Mothmidge).